The primary structure comprises 863 residues: Desmocollin-2 (863 aa).

A propeptide spanning residues 1–89 is cleaved from the precursor; the sequence is KFIGRVNLKE…QEKVLRRAKR (89 aa). Cadherin domains lie at 90-197, 198-309, 310-423, 424-528, and 529-644; these read RWAP…APIF, TETS…LPTF, TRSS…GPEC, DPRV…VIPQ, and RTVV…ILGK. The Extracellular portion of the chain corresponds to 90–644; it reads RWAPIPCSVP…TGNREVILGK (555 aa). N-linked (GlcNAc...) asparagine glycosylation is present at Asn-120. Asn-346, Asn-495, and Asn-579 each carry an N-linked (GlcNAc...) asparagine glycan. Residues 645 to 665 form a helical membrane-spanning segment; the sequence is WAILAILLGIALLFCILFTLV. Topologically, residues 666–863 are cytoplasmic; it reads CGATTGADKK…RTLAETCMKR (198 aa). Phosphoserine is present on residues Ser-826, Ser-830, and Ser-835.

As to quaternary structure, interacts with DSP, PKP2 and JUP. Interacts with DSG3; the interaction may limit the interaction of DSC3 with p38MAPK family members and therefore repress p38MAPK signaling activation. As to expression, expressed in esophagus and rumen. Weakly expressed in epithelia and cardiac muscle.

Its subcellular location is the cell membrane. It localises to the cell junction. The protein localises to the desmosome. In terms of biological role, a component of desmosome cell-cell junctions which are required for positive regulation of cellular adhesion. Promotes timely incorporation of DSG2 into desmosome intercellular junctions and promotes interaction of desmosome cell junctions with intermediate filament cytokeratin, via modulation of DSP phosphorylation. Plays an important role in desmosome-mediated maintenance of intestinal epithelial cell intercellular adhesion strength and barrier function. Positively regulates wound healing of intestinal mucosa via promotion of epithelial cell migration, and also plays a role in mechanotransduction of force between intestinal epithelial cells and extracellular matrix. May contribute to epidermal cell positioning (stratification) by mediating differential adhesiveness between cells that express different isoforms. The chain is Desmocollin-2 (DSC2) from Bos taurus (Bovine).